Consider the following 311-residue polypeptide: Ribosomal RNA small subunit methyltransferase H (311 aa).

Residues 33–35, aspartate 53, phenylalanine 77, aspartate 98, and glutamine 105 contribute to the S-adenosyl-L-methionine site; that span reads GGH.

It belongs to the methyltransferase superfamily. RsmH family.

It is found in the cytoplasm. The catalysed reaction is cytidine(1402) in 16S rRNA + S-adenosyl-L-methionine = N(4)-methylcytidine(1402) in 16S rRNA + S-adenosyl-L-homocysteine + H(+). In terms of biological role, specifically methylates the N4 position of cytidine in position 1402 (C1402) of 16S rRNA. The sequence is that of Ribosomal RNA small subunit methyltransferase H from Thiobacillus denitrificans (strain ATCC 25259 / T1).